A 600-amino-acid chain; its full sequence is ATP-dependent lipid A-core flippase (600 aa).

Helical transmembrane passes span 26–46 (VGIFLLSIIGFVIFASTQPML), 82–102 (LLIVLIAAWQGLGSFLGNYFL), 167–187 (VFLFIYLLMMNWKLTLVMLAI), and 266–286 (PMLQLVIYSAMAVLMFLVLFL). The 292-residue stretch at 30-321 (LLSIIGFVIF…LSEVSSTIQK (292 aa)) folds into the ABC transmembrane type-1 domain. The 237-residue stretch at 353 to 589 (LEVKNLSFFY…NGYYARLHAM (237 aa)) folds into the ABC transporter domain. ATP is bound at residue 387–394 (GRSGSGKS).

It belongs to the ABC transporter superfamily. Lipid exporter (TC 3.A.1.106) family. Homodimer.

The protein localises to the cell inner membrane. It carries out the reaction ATP + H2O + lipid A-core oligosaccharideSide 1 = ADP + phosphate + lipid A-core oligosaccharideSide 2.. In terms of biological role, involved in lipopolysaccharide (LPS) biosynthesis. Translocates lipid A-core from the inner to the outer leaflet of the inner membrane. Transmembrane domains (TMD) form a pore in the inner membrane and the ATP-binding domain (NBD) is responsible for energy generation. The protein is ATP-dependent lipid A-core flippase of Pseudomonas syringae pv. syringae (strain B728a).